The primary structure comprises 34 residues: MSDINTTCLPAWLATCPCTGDDVNPTLTCGESLC.

The propeptide occupies 1–10; that stretch reads MSDINTTCLP. Residues 11 to 17 constitute a cross-link (cyclopeptide (Ala-Pro)); sequence AWLATCP. A cross-link (2'-cysteinyl-6'-hydroxytryptophan sulfoxide (Trp-Cys)) is located at residues 12–16; sequence WLATC. Positions 18-34 are excised as a propeptide; that stretch reads CTGDDVNPTLTCGESLC.

Belongs to the MSDIN fungal toxin family. Processed by the macrocyclase-peptidase enzyme POPB to yield a toxic cyclic heptapeptide. POPB first removes 10 residues from the N-terminus. Conformational trapping of the remaining peptide forces the enzyme to release this intermediate rather than proceed to macrocyclization. The enzyme rebinds the remaining peptide in a different conformation and catalyzes macrocyclization of the N-terminal 7 residues.

In terms of biological role, toxin that belongs to the bicyclic heptapeptides called phallotoxins. Although structurally related to amatoxins, phallotoxins have a different mode of action, which is the stabilization of F-actin. Phallotoxins are poisonous when administered parenterally, but not orally because of poor absorption. The sequence is that of Phalloidin proprotein from Amanita phalloides (Death cap).